The chain runs to 149 residues: Transcriptional repressor NrdR (149 aa).

A zinc finger spans residues 3-34; it reads CPFCSIQETKVIDSRLVADGHQVRRRRECTMC. Positions 49–139 constitute an ATP-cone domain; sequence PRVVKRDGSR…VYRSFEDIRE (91 aa).

The protein belongs to the NrdR family. The cofactor is Zn(2+).

In terms of biological role, negatively regulates transcription of bacterial ribonucleotide reductase nrd genes and operons by binding to NrdR-boxes. The sequence is that of Transcriptional repressor NrdR from Pseudoalteromonas atlantica (strain T6c / ATCC BAA-1087).